We begin with the raw amino-acid sequence, 1499 residues long: Streptococcal surface protein B (1499 aa).

The N-terminal stretch at 1-37 (MQKREVFGFRKSKVAKTLCGAVLGAALIAIADQQVLA) is a signal peptide. The segment at 50 to 84 (AVTTTGNPATNLPEAQGEATEAASQSQAQAGSKDG) is disordered. Ag I/II A repeat units follow at residues 145–219 (KKTT…QKAN), 220–301 (EDSQ…KKAK), 302–383 (EDND…KQAN), and 384–465 (ATNE…KKDF). Disordered regions lie at residues 689-709 (YADSSNAEKSRGARWDTSEWD), 763-907 (TAPT…TPPV), and 1409-1472 (RTTT…TGTN). Basic and acidic residues predominate over residues 694–705 (NAEKSRGARWDT). The span at 789-799 (PTPPVKTPDQP) shows a compositional bias: pro residues. Residues 800 to 815 (EPSKPEEPTYETEKPL) show a composition bias toward basic and acidic residues. Over residues 828 to 838 (PTPPVKIPDQP) the composition is skewed to pro residues. Basic and acidic residues predominate over residues 839-854 (EPSKPEEPTYETEKPL). Pro residues-rich tracts occupy residues 867 to 877 (PTPPVKTPDQP) and 888 to 907 (DPLPTPPLAPTPKQLPTPPV). Positions 1428–1450 (KPKDPDKPETPKEPKVPSPKVED) are enriched in basic and acidic residues. Residues 1466 to 1470 (LPKTG) carry the LPXTG sorting signal motif. A Pentaglycyl murein peptidoglycan amidated threonine modification is found at threonine 1469. Positions 1470-1499 (GTNDATYMPYLGLAALVGFLGLGLAKRKED) are cleaved as a propeptide — removed by sortase.

Belongs to the antigen I/II family.

It localises to the secreted. Its subcellular location is the cell wall. The protein localises to the cell surface. Functionally, adhesin that mediates binding of bacteria to a variety of host cells. Plays a role in the bacterial invasion of dentinal tubules. A host immunostimulatory component, it modulates the innate immunity response. Plays a protective role against some antibiotics and cationic antimicrobial peptides (histatin-5, HTN3, but not beta-defensin 4A, DEFB4A). This is Streptococcal surface protein B from Streptococcus gordonii (strain Challis / ATCC 35105 / BCRC 15272 / CH1 / DL1 / V288).